Here is a 292-residue protein sequence, read N- to C-terminus: Coatomer subunit epsilon (292 aa).

It belongs to the COPE family. As to quaternary structure, oligomeric complex that consists of at least the alpha, beta, beta', gamma, delta, epsilon and zeta subunits.

It localises to the cytoplasm. The protein localises to the golgi apparatus membrane. The protein resides in the cytoplasmic vesicle. It is found in the COPI-coated vesicle membrane. Its function is as follows. The coatomer is a cytosolic protein complex that binds to dilysine motifs and reversibly associates with Golgi non-clathrin-coated vesicles, which further mediate biosynthetic protein transport from the ER, via the Golgi up to the trans Golgi network. The coatomer complex is required for budding from Golgi membranes, and is essential for the retrograde Golgi-to-ER transport of dilysine-tagged proteins. The sequence is that of Coatomer subunit epsilon (cope-1) from Caenorhabditis elegans.